Reading from the N-terminus, the 404-residue chain is Cysteine desulfurase IscS (404 aa).

Pyridoxal 5'-phosphate contacts are provided by residues 75-76, N155, Q183, and 203-205; these read AT and SAH. Residue K206 is modified to N6-(pyridoxal phosphate)lysine. Residue T243 participates in pyridoxal 5'-phosphate binding. The Cysteine persulfide intermediate role is filled by C328. C328 is a [2Fe-2S] cluster binding site.

It belongs to the class-V pyridoxal-phosphate-dependent aminotransferase family. NifS/IscS subfamily. In terms of assembly, homodimer. Forms a heterotetramer with IscU, interacts with other sulfur acceptors. Pyridoxal 5'-phosphate is required as a cofactor.

The protein localises to the cytoplasm. It catalyses the reaction (sulfur carrier)-H + L-cysteine = (sulfur carrier)-SH + L-alanine. Its pathway is cofactor biosynthesis; iron-sulfur cluster biosynthesis. Its function is as follows. Master enzyme that delivers sulfur to a number of partners involved in Fe-S cluster assembly, tRNA modification or cofactor biosynthesis. Catalyzes the removal of elemental sulfur atoms from cysteine to produce alanine. Functions as a sulfur delivery protein for Fe-S cluster synthesis onto IscU, an Fe-S scaffold assembly protein, as well as other S acceptor proteins. In Photorhabdus laumondii subsp. laumondii (strain DSM 15139 / CIP 105565 / TT01) (Photorhabdus luminescens subsp. laumondii), this protein is Cysteine desulfurase IscS.